Reading from the N-terminus, the 175-residue chain is Threonylcarbamoyl-AMP synthase (175 aa).

Residues 1 to 175 (MLHNDDVIAY…IINGKLIRYV (175 aa)) enclose the YrdC-like domain.

The protein belongs to the SUA5 family. TsaC subfamily.

It is found in the cytoplasm. The enzyme catalyses L-threonine + hydrogencarbonate + ATP = L-threonylcarbamoyladenylate + diphosphate + H2O. Its function is as follows. Required for the formation of a threonylcarbamoyl group on adenosine at position 37 (t(6)A37) in tRNAs that read codons beginning with adenine. Catalyzes the conversion of L-threonine, HCO(3)(-)/CO(2) and ATP to give threonylcarbamoyl-AMP (TC-AMP) as the acyladenylate intermediate, with the release of diphosphate. The polypeptide is Threonylcarbamoyl-AMP synthase (Buchnera aphidicola subsp. Acyrthosiphon pisum (strain APS) (Acyrthosiphon pisum symbiotic bacterium)).